The following is a 626-amino-acid chain: DNA mismatch repair protein MutL (626 aa).

It belongs to the DNA mismatch repair MutL/HexB family.

Its function is as follows. This protein is involved in the repair of mismatches in DNA. It is required for dam-dependent methyl-directed DNA mismatch repair. May act as a 'molecular matchmaker', a protein that promotes the formation of a stable complex between two or more DNA-binding proteins in an ATP-dependent manner without itself being part of a final effector complex. The polypeptide is DNA mismatch repair protein MutL (Chlorobium luteolum (strain DSM 273 / BCRC 81028 / 2530) (Pelodictyon luteolum)).